We begin with the raw amino-acid sequence, 203 residues long: MTGKTKVLVLYHSSYGHIETLAKAVAEGAASQAGTEVLLKRVPETMPADAMANAGMKVEQEAPVATPQELGDYDAVIFGTPTRFGNMTGQMRTFLDQTGGLWAKGALVGKVGSVFTSTGTGGGNETTITSFHTNLFHHGMVVVGLPYSVGTELFDISEVRGGSPYGASTLAGGDGKRQPTEKELSLARKQGAHVASIAAKLKA.

The Flavodoxin-like domain occupies valine 7–valine 194. FMN is bound by residues serine 13–isoleucine 18 and threonine 82–phenylalanine 84. Residue tyrosine 15 coordinates NAD(+). Tryptophan 102 contributes to the substrate binding site. FMN-binding positions include serine 117–glycine 122 and histidine 137.

The protein belongs to the WrbA family. FMN serves as cofactor.

The catalysed reaction is a quinone + NADH + H(+) = a quinol + NAD(+). The enzyme catalyses a quinone + NADPH + H(+) = a quinol + NADP(+). This is NAD(P)H dehydrogenase (quinone) from Parvibaculum lavamentivorans (strain DS-1 / DSM 13023 / NCIMB 13966).